The chain runs to 788 residues: Mediator of RNA polymerase II transcription subunit 15 (788 aa).

Residues 9-73 (DWRSTAFRQK…IHFRDIHNKK (65 aa)) are interaction with SREBF1. 2 disordered regions span residues 95 to 139 (GAAG…MAPH) and 260 to 329 (QQQA…PLVS). The segment covering 108–117 (QSLGGMGSLG) has biased composition (gly residues). Over residues 260-269 (QQQALQAQPP) the composition is skewed to low complexity. A compositionally biased stretch (pro residues) spans 270–284 (IQQPPMQQPQPPPSQ). Composition is skewed to low complexity over residues 285 to 294 (ALPQQLQQMH) and 309 to 329 (PVAQ…PLVS). The residue at position 349 (Arg349) is an Asymmetric dimethylarginine. The interval 412 to 530 (SSSIPLGRQP…PAGSSQAEEQ (119 aa)) is disordered. A compositionally biased stretch (low complexity) spans 426–446 (SQSSLPMLSSPSPGQQVQTPQ). Residues 447 to 459 (SMPPPPQPSPQPG) show a composition bias toward pro residues. The segment covering 460 to 482 (QPSSQPNSNVSSGPAPSPSSFLP) has biased composition (low complexity). Polar residues-rich tracts occupy residues 493–503 (VTARTPQNFSV) and 511–529 (TPVN…QAEE). Residues 547–564 (RRMINKIDKNEDRKKDLS) carry the Nuclear localization signal motif. Phosphothreonine is present on Thr603.

This sequence belongs to the Mediator complex subunit 15 family. In terms of assembly, component of the Mediator complex, which is composed of MED1, MED4, MED6, MED7, MED8, MED9, MED10, MED11, MED12, MED13, MED13L, MED14, MED15, MED16, MED17, MED18, MED19, MED20, MED21, MED22, MED23, MED24, MED25, MED26, MED27, MED29, MED30, MED31, CCNC, CDK8 and CDC2L6/CDK11. The MED12, MED13, CCNC and CDK8 subunits form a distinct module termed the CDK8 module. Mediator containing the CDK8 module is less active than Mediator lacking this module in supporting transcriptional activation. Individual preparations of the Mediator complex lacking one or more distinct subunits have been variously termed ARC, CRSP, DRIP, PC2, SMCC and TRAP. Interacts with SMAD2, SMAD3, SREBF1 and SREBF2. Interacts with WWTR1. Interacts with TRIM11. Post-translationally, ubiquitinated by TRIM11, leading to proteasomal degradation. As to expression, expressed in all tissues examined, including heart, brain, lung, spleen, thymus, pancreas, blood leukocyte and placenta. However, the level of expression varied, with highest expression in the placenta and peripheral blood and lowest in the pancreas and kidney.

The protein resides in the cytoplasm. It is found in the nucleus. In terms of biological role, component of the Mediator complex, a coactivator involved in the regulated transcription of nearly all RNA polymerase II-dependent genes. Mediator functions as a bridge to convey information from gene-specific regulatory proteins to the basal RNA polymerase II transcription machinery. Mediator is recruited to promoters by direct interactions with regulatory proteins and serves as a scaffold for the assembly of a functional preinitiation complex with RNA polymerase II and the general transcription factors. Required for cholesterol-dependent gene regulation. Positively regulates the Nodal signaling pathway. This Homo sapiens (Human) protein is Mediator of RNA polymerase II transcription subunit 15 (MED15).